Consider the following 357-residue polypeptide: DNA integrity scanning protein DisA (357 aa).

Residues valine 8–isoleucine 146 form the DAC domain. ATP is bound by residues glycine 75, leucine 93, and methionine 106 to threonine 110.

Belongs to the DisA family. Homooctamer. It depends on Mg(2+) as a cofactor.

It catalyses the reaction 2 ATP = 3',3'-c-di-AMP + 2 diphosphate. Its function is as follows. Participates in a DNA-damage check-point that is active prior to asymmetric division when DNA is damaged. DisA forms globular foci that rapidly scan along the chromosomes during sporulation, searching for lesions. When a lesion is present, DisA pauses at the lesion site. This triggers a cellular response that culminates in a temporary block in sporulation initiation. Also has diadenylate cyclase activity, catalyzing the condensation of 2 ATP molecules into cyclic di-AMP (c-di-AMP). c-di-AMP acts as a signaling molecule that couples DNA integrity with progression of sporulation. The rise in c-di-AMP level generated by DisA while scanning the chromosome, operates as a positive signal that advances sporulation; upon encountering a lesion, the DisA focus arrests at the damaged site and halts c-di-AMP synthesis. This is DNA integrity scanning protein DisA from Bacillus cereus (strain B4264).